We begin with the raw amino-acid sequence, 1591 residues long: MEVHDGLKSPDKAAKSRYDDDRIDQDSEDEAVRLVANPDPSKPRKISERKRADQAAFESWVNDNKIRLSLPSATKSRRSGIRELFSSDETLETRPTRTRPRERVIEGPREYQIELFERAKQKNTIAVLDTGTGKTLIAILLIRHIIELELGARWQGREKRITFFLVDKVALVRQQTDHIRANLDFPVTGLHGDTVRNLWYSKEYFEKLLQEQEVVVCTAEILYRCLHRSYLNISQVSLVVFDEAHHAKKNHVYARIIKDFYLMEEDCQKRPRIFGMTASPIDTKDTCISYERATHELESLLHSEIATISDRDLLKVIGSRPQEVRKSYARVLRQENTELCNQLRELVGNHPLFKQTFDSAEFAVTELGAWCADKLWELCFREEAVSTLDGRVEGSRARDPDEVGESSHEVSNAREALSLVQQWSFSPPEDGSLSTKTHKLIEILAECFSQASAGNAIQCIVFVKRRDTAVLLNALCEQAEIRTKIPDLKGAFLIGAGRGGNAAFTTTRQQEQTVSRFRDGEINCLFATSIAEEGLDIPGCNVVIRFDLHGTTIQYIQSRGRARMRNSWFIHMTEFGNPEHNRRWFQDRVNEQKMRDFCLSLPKDRIMEKAEVDDVLRGDQSQKIFVVPGSKASLTFKQSLVVLAEFVATLPARPDEILSVDYTVVPVFGGFQGEVYLPASSPLRSAMGGVYRSKQLAKCAAAYAMCIQLYNSNYLDDHLKSTLAKVLPAMRNARLAVSSKKRKSYNMRTKPVLWSEVGPLTELYAMVLSLAQPGAAYYHSRPILLLTRKPLPEIAQFPLFFGKGSSRRSNVRCIPLAHPWSPTTTQVEGICAFTLCIFRDIFSKDFQASGTDMPYFLAPSTGIEHGTDLSSLVNPERIIDWATVHRTTTTDRVPYNFNEPDEFFQDKYVSDPFDGSRKFFMRKVRRDLKPQDKVPEGVPAPSKWRAVEHTILNYSVSLWKKSRAGHNSRQDQPVVEAELAPLRRNLLDETDGENSTGPQTCYLVLETLLISQIPVDTVVMAYTFPAIIYRLENSLISLEACQNLGLDIPIDIALIAMTKDSDNSDDHDEAPINFQSGMGQNYERLEFLGDCFLKMATSIALYTLVEGDEFEYHVERMLDICNKNLLNWALESNLQEHIRSKSFNRRTWYPPGLKLLKGKKTEVDDEHALGDKSIADVCEALIGAAYLTAQAQSSPNFDLAVKAVTVMTHSKTHTMQAWSDYYASYQCPEWLSTPPSQTQLELCSQIKNKMGYRFKNPRLLRCAFMHPSYPRQYENIPSYQRLEFLGDSLLDMVCVDYLFKKHPDKDPQWLTEHKMAMVSNQFFGCVAVGLGFHRHLIHMQPALGGSITEWAELVTKKREEARQLAVRRGQREEDYARDFWIEVHHPPKCLPDILEAYVGALFVDTGYDYSAVVGFFDRHIKPYFADMSIYDMYSSKHPVTHITSIITTQFGCSSFRLMVHEIPDDVQGEGLVTGAVKVVAACMIHGEVRCHAVAASGRYAKLAVAKQAVAIYEDMSPTEFRLRHGCNCKPEDGDGDHGVLVDHRADCEPEEPLRKQDPPAKSVVDVDGKTIAEMRLRHSKQMNDQEECLSW.

Composition is skewed to basic and acidic residues over residues 1-20 (MEVH…RYDD) and 41-52 (SKPRKISERKRA). A disordered region spans residues 1 to 52 (MEVHDGLKSPDKAAKSRYDDDRIDQDSEDEAVRLVANPDPSKPRKISERKRA). Residues 115–298 (LFERAKQKNT…SYERATHELE (184 aa)) form the Helicase ATP-binding domain. 128-135 (LDTGTGKT) lines the ATP pocket. The DEAH box motif lies at 242-245 (DEAH). The 169-residue stretch at 439–607 (KLIEILAECF…CLSLPKDRIM (169 aa)) folds into the Helicase C-terminal domain. Positions 639 to 729 (SLVVLAEFVA…KSTLAKVLPA (91 aa)) constitute a Dicer dsRNA-binding fold domain. Positions 888–1012 (TTTDRVPYNF…LVLETLLISQ (125 aa)) constitute a PAZ domain. RNase III domains follow at residues 1050-1190 (IDIA…LTAQ) and 1243-1406 (CSQI…VDTG). Positions 1283, 1392, and 1395 each coordinate Mg(2+). In terms of domain architecture, DRBM spans 1440 to 1514 (THITSIITTQ…AKQAVAIYED (75 aa)). Positions 1452, 1485, 1526, and 1528 each coordinate Zn(2+).

This sequence belongs to the helicase family. Dicer subfamily. It depends on Mg(2+) as a cofactor. Requires Mn(2+) as cofactor.

Its function is as follows. Dicer-like endonuclease which seems not to be involved in cleaving double-stranded RNA in the RNA interference (RNAi) pathway, contrary to its DCL2 counterpart. This Pyricularia oryzae (strain 70-15 / ATCC MYA-4617 / FGSC 8958) (Rice blast fungus) protein is Dicer-like protein 1 (DCL1).